The chain runs to 547 residues: Auxin transporter-like protein 3 (547 aa).

Residues 1 to 74 (MASGSSGGGY…DAWFSCASNQ (74 aa)) are Cytoplasmic-facing. A helical transmembrane segment spans residues 75 to 92 (VAQVLLTLPYSFAQLGMA). The Extracellular segment spans residues 93–94 (SG). The helical transmembrane segment at 95–115 (LLFQLFYGLLGSWTAYLISIL) threads the bilayer. The Cytoplasmic portion of the chain corresponds to 116 to 151 (YLEYRTRKERDKVDFRNHVIQWFEVLDGLLGRHWRN). The chain crosses the membrane as a helical span at residues 152 to 172 (VGLAFNCTFLLFGSVIQLIGC). The Extracellular segment spans residues 173–187 (ASNIYYINDHLDKRT). Residues 188–208 (WTYIFGACCATTVFIPSFHNY) form a helical membrane-spanning segment. Topologically, residues 209 to 211 (RIW) are cytoplasmic. Residues 212 to 232 (SFLGLLMTTYTAWYIAVASLI) traverse the membrane as a helical segment. The Extracellular portion of the chain corresponds to 233 to 247 (HGQVEGVAHSGPTSI). A helical transmembrane segment spans residues 248–268 (VLYFTGATNILYTFGGHAVTV). The Cytoplasmic segment spans residues 269 to 281 (EIMHAMWRPQKFK). A helical membrane pass occupies residues 282-302 (AIYLLATVYVLTLTLPSASAA). The Extracellular segment spans residues 303-329 (YWAFGDALLTHSNALALLPRTPWRDAA). The chain crosses the membrane as a helical span at residues 330-350 (VVLMLIHQFITFGFACTPLYF). At 351–371 (VWEKLVGLHGCPSLCKRAAAR) the chain is on the cytoplasmic side. The helical transmembrane segment at 372–392 (LPVVLPIWFLAIIFPFFGPIN) threads the bilayer. Position 393 (Ser393) is a topological domain, extracellular. The chain crosses the membrane as a helical span at residues 394–414 (AVGSLLVSFTVYIIPSLAYMV). The Cytoplasmic portion of the chain corresponds to 415–440 (TFRSPQSRQNAVERPPRFAGGWTGAY). The chain crosses the membrane as a helical span at residues 441-461 (VINSFVVAWVLVVGFGFGGWA). Over 462–547 (SITNFVHQVD…HHHRHHRHGL (86 aa)) the chain is Extracellular. Asn509 carries N-linked (GlcNAc...) asparagine glycosylation.

It belongs to the amino acid/polyamine transporter 2 family. Amino acid/auxin permease (AAAP) (TC 2.A.18.1) subfamily.

The protein resides in the cell membrane. Carrier protein involved in proton-driven auxin influx. May mediate the formation of auxin gradient from developing leaves (site of auxin biosynthesis) to tips. This chain is Auxin transporter-like protein 3, found in Oryza sativa subsp. japonica (Rice).